The primary structure comprises 658 residues: Putative endo-beta-N-acetylglucosaminidase (658 aa).

Positions 1-23 are cleaved as a signal peptide; it reads MKKVRFIFLALLFFLASPEGAMA. Cell wall-binding repeat units lie at residues 42–63, 65–84, 86–105, 124–145, 147–166, 185–206, 208–227, 229–248, 250–271, 273–292, 294–315, 317–336, and 338–359; these read ANEWVFDTHYQSWFYIKADANY, ENEWLKQGDDYFYLKSGGYM, KSEWVEDKGAFYYLDQDGKM, IEDWVYDSQYDAWFYIKADGQH, EKEWLQIKGKDYYFKSGGYL, QQGWLFDKQYQSWFYIKENGNY, DKEWIFENGHYYYLKSGGYM, ANEWIWDKESWFYLKFDGKM, EKEWVYDSHSQAWYYFKSGGYM, and ANEWIWDKESWFYLKSDGKI.

This sequence belongs to the glycosyl hydrolase 73 family.

It is found in the secreted. It catalyses the reaction an N(4)-(oligosaccharide-(1-&gt;3)-[oligosaccharide-(1-&gt;6)]-beta-D-Man-(1-&gt;4)-beta-D-GlcNAc-(1-&gt;4)-alpha-D-GlcNAc)-L-asparaginyl-[protein] + H2O = an oligosaccharide-(1-&gt;3)-[oligosaccharide-(1-&gt;6)]-beta-D-Man-(1-&gt;4)-D-GlcNAc + N(4)-(N-acetyl-beta-D-glucosaminyl)-L-asparaginyl-[protein]. Its function is as follows. Plays an important role in cell wall degradation and cell separation. This is Putative endo-beta-N-acetylglucosaminidase (lytB) from Streptococcus pneumoniae serotype 4 (strain ATCC BAA-334 / TIGR4).